Reading from the N-terminus, the 858-residue chain is Protein 4.1 (858 aa).

Positions 1–125 (MTTEKSLAAE…KEIELGNSLD (125 aa)) are disordered. S14 is subject to Phosphoserine. Residues 31–50 (QQETQLEEASQAAAAEGSDQ) are compositionally biased toward low complexity. T62 carries the post-translational modification Phosphothreonine. A compositionally biased stretch (basic and acidic residues) spans 63 to 77 (PTHEDLTKNKERTSE). Positions 78 to 89 (SRGLSRLLSSFL) are enriched in low complexity. Residues S86, S87, S97, S106, S123, S151, S153, and S154 each carry the phosphoserine modification. Over residues 103–119 (EVESEKEKGEGGQKEIE) the composition is skewed to basic and acidic residues. The disordered stretch occupies residues 155 to 208 (IETQPAQEEHREDPDSETKEGEGIEECSGTEVKEDPESRAEREPEASQKPVRRH). Basic and acidic residues-rich tracts occupy residues 161 to 176 (QEEH…KEGE) and 185 to 200 (EVKE…EPEA). S192 carries the phosphoserine modification. The FERM domain maps to 211–492 (MHCKVSLLDD…EHHTFFRLTS (282 aa)). Y223 carries the phosphotyrosine modification. At T379 the chain carries Phosphothreonine. Positions 495-608 (TIPKSKFLAL…PAEPEPTEAW (114 aa)) are hydrophilic. A disordered region spans residues 518-636 (TRQASALIDR…TQKLAGKGED (119 aa)). Residues S522, S541, S543, and S556 each carry the phosphoserine modification. 2 stretches are compositionally biased toward basic and acidic residues: residues 581 to 595 (TPKE…RGEE) and 606 to 615 (EAWKVEKTHT). Residues 609–707 (KVEKTHTEVT…WDKRLSTHSP (99 aa)) are spectrin--actin-binding. A compositionally biased stretch (polar residues) spans 616 to 629 (EVTVPTSNGDQTQK). Phosphotyrosine is present on Y654. Phosphoserine occurs at positions 658, 668, 678, 703, and 706. The tract at residues 710-858 (TLNINGQVPT…VHQETEISEE (149 aa)) is C-terminal (CTD). Residues T730 and T853 each carry the phosphothreonine modification.

As to quaternary structure, binds with a high affinity to glycophorin and with lower affinity to band III protein. Associates with the nuclear mitotic apparatus. Binds calmodulin, CPAP and DLG1. Also found to associate with contractile apparatus and tight junctions. Interacts with NUMA1; this interaction is negatively regulated by CDK1 during metaphase and promotes anaphase-specific localization of NUMA1 in symmetrically dividing cells. Interacts with ATP2B1; regulates small intestinal calcium absorption through regulation of membrane expression of ATP2B1. In terms of processing, O-glycosylated; contains N-acetylglucosamine side chains in the C-terminal domain. Post-translationally, phosphorylated at multiple sites by different protein kinases and each phosphorylation event selectively modulates the protein's functions. Phosphorylation on Tyr-654 reduces the ability of 4.1 to promote the assembly of the spectrin/actin/4.1 ternary complex.

It localises to the nucleus. Its subcellular location is the cytoplasm. The protein resides in the cytoskeleton. The protein localises to the cell cortex. In terms of biological role, protein 4.1 is a major structural element of the erythrocyte membrane skeleton. It plays a key role in regulating membrane physical properties of mechanical stability and deformability by stabilizing spectrin-actin interaction. Recruits DLG1 to membranes. Required for dynein-dynactin complex and NUMA1 recruitment at the mitotic cell cortex during anaphase. This chain is Protein 4.1, found in Mus musculus (Mouse).